The following is a 445-amino-acid chain: tRNA modification GTPase MnmE (445 aa).

Residues arginine 20, glutamate 79, and lysine 119 each contribute to the (6S)-5-formyl-5,6,7,8-tetrahydrofolate site. A TrmE-type G domain is found at 215–371 (GLKLAIIGPP…ILKNIENIAE (157 aa)). Asparagine 225 lines the K(+) pocket. GTP is bound by residues 225-230 (NVGKSS), 244-250 (SNIAGTT), and 269-272 (DTAG). Serine 229 is a binding site for Mg(2+). 3 residues coordinate K(+): serine 244, isoleucine 246, and threonine 249. Threonine 250 serves as a coordination point for Mg(2+). (6S)-5-formyl-5,6,7,8-tetrahydrofolate is bound at residue lysine 445.

This sequence belongs to the TRAFAC class TrmE-Era-EngA-EngB-Septin-like GTPase superfamily. TrmE GTPase family. As to quaternary structure, homodimer. Heterotetramer of two MnmE and two MnmG subunits. K(+) serves as cofactor.

It is found in the cytoplasm. In terms of biological role, exhibits a very high intrinsic GTPase hydrolysis rate. Involved in the addition of a carboxymethylaminomethyl (cmnm) group at the wobble position (U34) of certain tRNAs, forming tRNA-cmnm(5)s(2)U34. The protein is tRNA modification GTPase MnmE of Rickettsia rickettsii (strain Iowa).